The following is an 81-amino-acid chain: Cytochrome b559 subunit alpha (81 aa).

The chain crosses the membrane as a helical span at residues 21 to 35 (VIHSITIPMLFIAGW). Residue H23 participates in heme binding.

This sequence belongs to the PsbE/PsbF family. Heterodimer of an alpha subunit and a beta subunit. PSII is composed of 1 copy each of membrane proteins PsbA, PsbB, PsbC, PsbD, PsbE, PsbF, PsbH, PsbI, PsbJ, PsbK, PsbL, PsbM, PsbT, PsbX, PsbY, PsbZ, Psb30/Ycf12, peripheral proteins PsbO, CyanoQ (PsbQ), PsbU, PsbV and a large number of cofactors. It forms dimeric complexes. Requires heme b as cofactor.

It is found in the cellular thylakoid membrane. In terms of biological role, this b-type cytochrome is tightly associated with the reaction center of photosystem II (PSII). PSII is a light-driven water:plastoquinone oxidoreductase that uses light energy to abstract electrons from H(2)O, generating O(2) and a proton gradient subsequently used for ATP formation. It consists of a core antenna complex that captures photons, and an electron transfer chain that converts photonic excitation into a charge separation. The protein is Cytochrome b559 subunit alpha of Rippkaea orientalis (strain PCC 8801 / RF-1) (Cyanothece sp. (strain PCC 8801)).